The primary structure comprises 318 residues: tRNA U34 carboxymethyltransferase (318 aa).

Residues lysine 88, tryptophan 102, lysine 107, glycine 126, methionine 192, tyrosine 196, and arginine 311 each contribute to the carboxy-S-adenosyl-L-methionine site.

It belongs to the class I-like SAM-binding methyltransferase superfamily. CmoB family. Homotetramer.

The catalysed reaction is carboxy-S-adenosyl-L-methionine + 5-hydroxyuridine(34) in tRNA = 5-carboxymethoxyuridine(34) in tRNA + S-adenosyl-L-homocysteine + H(+). Its function is as follows. Catalyzes carboxymethyl transfer from carboxy-S-adenosyl-L-methionine (Cx-SAM) to 5-hydroxyuridine (ho5U) to form 5-carboxymethoxyuridine (cmo5U) at position 34 in tRNAs. This chain is tRNA U34 carboxymethyltransferase, found in Pseudomonas fluorescens (strain ATCC BAA-477 / NRRL B-23932 / Pf-5).